We begin with the raw amino-acid sequence, 513 residues long: Trigger factor (513 aa).

The PPIase FKBP-type domain occupies 164-249 (GDQIIIDFLG…VKAVKNAGEF (86 aa)). The disordered stretch occupies residues 436–513 (QAAIEAEEGA…KAPAKKKAEG (78 aa)). Positions 452-461 (AKKAPAKKKA) are enriched in basic residues. Low complexity predominate over residues 489–498 (ADEAPAAEEA). Residues 501 to 513 (AKKKAPAKKKAEG) are compositionally biased toward basic residues.

The protein belongs to the FKBP-type PPIase family. Tig subfamily.

Its subcellular location is the cytoplasm. The catalysed reaction is [protein]-peptidylproline (omega=180) = [protein]-peptidylproline (omega=0). Functionally, involved in protein export. Acts as a chaperone by maintaining the newly synthesized protein in an open conformation. Functions as a peptidyl-prolyl cis-trans isomerase. In Novosphingobium aromaticivorans (strain ATCC 700278 / DSM 12444 / CCUG 56034 / CIP 105152 / NBRC 16084 / F199), this protein is Trigger factor.